The following is a 425-amino-acid chain: Isocitrate dehydrogenase [NADP] (425 aa).

T114 serves as a coordination point for NADP(+). S123, N125, R129, R139, and R162 together coordinate D-threo-isocitrate. D316 is a Mg(2+) binding site. Residues 348–354 (HGTAPKY), N361, Y400, and R404 each bind NADP(+).

This sequence belongs to the isocitrate and isopropylmalate dehydrogenases family. As to quaternary structure, homodimer. Requires Mg(2+) as cofactor. It depends on Mn(2+) as a cofactor.

It catalyses the reaction D-threo-isocitrate + NADP(+) = 2-oxoglutarate + CO2 + NADPH. Catalyzes the oxidative decarboxylation of isocitrate to 2-oxoglutarate and carbon dioxide with the concomitant reduction of NADP(+). The chain is Isocitrate dehydrogenase [NADP] (icd) from Helicobacter pylori (strain ATCC 700392 / 26695) (Campylobacter pylori).